A 370-amino-acid polypeptide reads, in one-letter code: Putative phosphoserine aminotransferase (370 aa).

A disordered region spans residues M1–S22. R44 contacts L-glutamate. Positions 102, 148, 170, and 193 each coordinate pyridoxal 5'-phosphate. K194 carries the post-translational modification N6-(pyridoxal phosphate)lysine. N245–T246 lines the pyridoxal 5'-phosphate pocket.

Belongs to the class-V pyridoxal-phosphate-dependent aminotransferase family. SerC subfamily. In terms of assembly, homodimer. It depends on pyridoxal 5'-phosphate as a cofactor.

The protein resides in the cytoplasm. The enzyme catalyses O-phospho-L-serine + 2-oxoglutarate = 3-phosphooxypyruvate + L-glutamate. It catalyses the reaction 4-(phosphooxy)-L-threonine + 2-oxoglutarate = (R)-3-hydroxy-2-oxo-4-phosphooxybutanoate + L-glutamate. It participates in amino-acid biosynthesis; L-serine biosynthesis; L-serine from 3-phospho-D-glycerate: step 2/3. The protein operates within cofactor biosynthesis; pyridoxine 5'-phosphate biosynthesis; pyridoxine 5'-phosphate from D-erythrose 4-phosphate: step 3/5. Catalyzes the reversible conversion of 3-phosphohydroxypyruvate to phosphoserine and of 3-hydroxy-2-oxo-4-phosphonooxybutanoate to phosphohydroxythreonine. This Mycobacterium sp. (strain JLS) protein is Putative phosphoserine aminotransferase.